The following is an 879-amino-acid chain: Beta-alanyl-bioamine nonribosomal peptide synthetase ebony (879 aa).

Positions 26-540 (FEEQQLRHAD…EHVPLLVNGK (515 aa)) are adenylation. The Carrier domain maps to 573–650 (EDLKLTARDL…EIIEKMAANH (78 aa)). Ser-611 is modified (O-(pantetheine 4'-phosphoryl)serine). The condensation stretch occupies residues 666-679 (LKMEAVPLRLEHRQ). Position 696 (Glu-696) interacts with dopamine. Residue Glu-696 coordinates histamine. Thr-825 and Asn-827 together coordinate beta-alanine.

It belongs to the NRP synthetase family. The cofactor is pantetheine 4'-phosphate. Mg(2+) is required as a cofactor. In terms of tissue distribution, expressed in the optic neuropils in the lamina and in distinct cells at the distal border of the medulla cortex (at protein level). Expressed in the protocerebrum and thoracic ganglia (at protein level). Expressed in antennal lobes, antennal nerves and subesophagic ganglion (at protein level). Specifically, expressed in epithelial glial cells of the medulla that surround the synaptic cleft of photoreceptor axonal endings (at protein level). Expressed in some cells in the cuticle.

It is found in the cytoplasm. It catalyses the reaction histamine + beta-alanine + ATP = carcinine + AMP + diphosphate + H(+). The catalysed reaction is beta-alanine + ATP + H(+) = beta-alanyl-5'-AMP + diphosphate. It carries out the reaction beta-alanyl-5'-AMP + holo-[peptidyl-carrier protein] = beta-alanyl-[peptidyl-carrier protein] + AMP + H(+). The enzyme catalyses beta-alanyl-[peptidyl-carrier protein] + histamine = carcinine + holo-[peptidyl-carrier protein] + H(+). It catalyses the reaction dopamine + beta-alanine + ATP = beta-alanyl-dopamine + AMP + diphosphate + H(+). The catalysed reaction is beta-alanyl-[peptidyl-carrier protein] + dopamine = beta-alanyl-dopamine + holo-[peptidyl-carrier protein] + H(+). Nonribosomal peptide synthase which is required for the regulation of histamine and dopamine levels in various tissues through their condensation with beta-alanine. In epithelial glial cells, plays an essential role in the inactivation of histamine, the main neurotransmitter in the optical nerve system, by catalyzing the conversion of histamine into carcinine. In the cuticle, catalyzes the condensation of beta-alanine with dopamine to form beta-alanyl-dopamine (NBAD), a metabolite involved in the pigmentation and sclerotization of the insect cuticle. Also, regulates the cuticular hydrocarbon composition in females. Acts downstream of the body clock to regulate circadian behavioral rhythms. Can also condense beta-alanine with biogenic amines tyramine, octopamine, and serotonin in vitro. The polypeptide is Beta-alanyl-bioamine nonribosomal peptide synthetase ebony (Drosophila melanogaster (Fruit fly)).